Consider the following 466-residue polypeptide: Methylenetetrahydrofolate--tRNA-(uracil-5-)-methyltransferase TrmFO (466 aa).

12-17 (GAGLAG) contacts FAD.

This sequence belongs to the MnmG family. TrmFO subfamily. It depends on FAD as a cofactor.

It is found in the cytoplasm. It carries out the reaction uridine(54) in tRNA + (6R)-5,10-methylene-5,6,7,8-tetrahydrofolate + NADH + H(+) = 5-methyluridine(54) in tRNA + (6S)-5,6,7,8-tetrahydrofolate + NAD(+). It catalyses the reaction uridine(54) in tRNA + (6R)-5,10-methylene-5,6,7,8-tetrahydrofolate + NADPH + H(+) = 5-methyluridine(54) in tRNA + (6S)-5,6,7,8-tetrahydrofolate + NADP(+). Catalyzes the folate-dependent formation of 5-methyl-uridine at position 54 (M-5-U54) in all tRNAs. This Synechococcus elongatus (strain ATCC 33912 / PCC 7942 / FACHB-805) (Anacystis nidulans R2) protein is Methylenetetrahydrofolate--tRNA-(uracil-5-)-methyltransferase TrmFO.